The primary structure comprises 248 residues: Glutathione S-transferase omega-2 (248 aa).

Residues 22 to 101 form the GST N-terminal domain; sequence GVIRIYSMRF…YLDDVYPGRK (80 aa). Cys32 serves as the catalytic Nucleophile. Residues Lys59, Ile72, and 85–86 each bind glutathione; that span reads ES. A GST C-terminal domain is found at 106-231; sequence DPYERARQKM…VFLGFLNLYF (126 aa).

This sequence belongs to the GST superfamily. Omega family.

It catalyses the reaction RX + glutathione = an S-substituted glutathione + a halide anion + H(+). It carries out the reaction L-dehydroascorbate + 2 glutathione = glutathione disulfide + L-ascorbate. The catalysed reaction is methylarsonate + 2 glutathione + H(+) = methylarsonous acid + glutathione disulfide + H2O. In terms of biological role, exhibits glutathione-dependent thiol transferase activity. Has high dehydroascorbate reductase activity and may contribute to the recycling of ascorbic acid. Participates in the biotransformation of inorganic arsenic and reduces monomethylarsonic acid (MMA). The chain is Glutathione S-transferase omega-2 (Gsto2) from Mus musculus (Mouse).